A 354-amino-acid chain; its full sequence is Ribosomal RNA large subunit methyltransferase M (354 aa).

S-adenosyl-L-methionine is bound by residues Ser183, 216–219, Asp235, Asp255, and Asp271; that span reads SPGG. The Proton acceptor role is filled by Lys300.

This sequence belongs to the class I-like SAM-binding methyltransferase superfamily. RNA methyltransferase RlmE family. RlmM subfamily. In terms of assembly, monomer.

It localises to the cytoplasm. The enzyme catalyses cytidine(2498) in 23S rRNA + S-adenosyl-L-methionine = 2'-O-methylcytidine(2498) in 23S rRNA + S-adenosyl-L-homocysteine + H(+). Its function is as follows. Catalyzes the 2'-O-methylation at nucleotide C2498 in 23S rRNA. The protein is Ribosomal RNA large subunit methyltransferase M of Pseudomonas entomophila (strain L48).